The sequence spans 116 residues: U16-barytoxin-Tl1a (116 aa).

The signal sequence occupies residues 1–20 (MKTIIVFLSLLVLATKFGDA). The propeptide occupies 21-74 (KEGVNQEQKKEVTQNEFRVEYLNEMAAMSLLQQLEAIESALFEKEAGRNSRQKR). 3 disulfides stabilise this stretch: Cys-75-Cys-90, Cys-82-Cys-95, and Cys-89-Cys-110.

It belongs to the neurotoxin 14 (magi-1) family. 06 (ICK-Trit) subfamily. Expressed by the venom gland.

It localises to the secreted. Functionally, ion channel inhibitor. The chain is U16-barytoxin-Tl1a from Trittame loki (Brush-footed trapdoor spider).